The sequence spans 376 residues: 26S proteasome non-ATPase regulatory subunit 13 (376 aa).

Positions 171–338 (SYYKDALRFL…KRVHMTWVQP (168 aa)) constitute a PCI domain.

Belongs to the proteasome subunit S11 family. Component of the 19S proteasome regulatory particle complex. The 26S proteasome consists of a 20S core particle (CP) and two 19S regulatory subunits (RP). The regulatory particle is made of a lid composed of 9 subunits including PSMD13, a base containing 6 ATPases and few additional components.

In terms of biological role, component of the 26S proteasome, a multiprotein complex involved in the ATP-dependent degradation of ubiquitinated proteins. This complex plays a key role in the maintenance of protein homeostasis by removing misfolded or damaged proteins, which could impair cellular functions, and by removing proteins whose functions are no longer required. Therefore, the proteasome participates in numerous cellular processes, including cell cycle progression, apoptosis, or DNA damage repair. This Bos taurus (Bovine) protein is 26S proteasome non-ATPase regulatory subunit 13 (PSMD13).